The sequence spans 675 residues: PTS system glucose-specific EIICBA component (675 aa).

The region spanning 3–414 (KKLFGQMQRI…FNYKTPGRED (412 aa)) is the PTS EIIC type-1 domain. 11 helical membrane passes run 16–36 (LMLP…GTAF), 59–79 (MLTG…ALGV), 81–101 (IGLA…FIIL), 126–146 (VLGI…GALA), 170–190 (FVPI…AIIW), 211–231 (LAVF…LHHI), 273–293 (FMQG…LAIY), 303–323 (VVAG…ITEP), 328–348 (FLFV…LSFL), 355–375 (VHLG…GILP), and 378–398 (TAWW…YFVF). The 82-residue stretch at 425-506 (SQLPFDVLKA…AKIISGEITK (82 aa)) folds into the PTS EIIB type-1 domain. The active-site Phosphocysteine intermediate; for EIIB activity is Cys447. The PTS EIIA type-1 domain maps to 547-651 (DKVFSEKMMG…SIITPVIITN (105 aa)). The active-site Tele-phosphohistidine intermediate; for EIIA activity is the His599.

The protein localises to the cell membrane. The catalysed reaction is N(pros)-phospho-L-histidyl-[protein] + D-glucose(out) = D-glucose 6-phosphate(in) + L-histidyl-[protein]. In terms of biological role, the phosphoenolpyruvate-dependent sugar phosphotransferase system (sugar PTS), a major carbohydrate active transport system, catalyzes the phosphorylation of incoming sugar substrates concomitantly with their translocation across the cell membrane. This system is involved in glucose transport. This chain is PTS system glucose-specific EIICBA component (ptsG), found in Staphylococcus epidermidis.